The chain runs to 202 residues: Holliday junction branch migration complex subunit RuvA (202 aa).

The segment at 1-64 (MIDFLKGRLV…ETALEMFGFS (64 aa)) is domain I. Positions 65 to 143 (SELDRTAFLL…KQQVAVSAEL (79 aa)) are domain II. The segment at 144–152 (PASDGVPVL) is flexible linker. A domain III region spans residues 152–202 (LAGRAENEALAALISLGYTPREAREALNRLPDRKLDAAGLVHAALRIMGSQ).

Belongs to the RuvA family. In terms of assembly, homotetramer. Forms an RuvA(8)-RuvB(12)-Holliday junction (HJ) complex. HJ DNA is sandwiched between 2 RuvA tetramers; dsDNA enters through RuvA and exits via RuvB. An RuvB hexamer assembles on each DNA strand where it exits the tetramer. Each RuvB hexamer is contacted by two RuvA subunits (via domain III) on 2 adjacent RuvB subunits; this complex drives branch migration. In the full resolvosome a probable DNA-RuvA(4)-RuvB(12)-RuvC(2) complex forms which resolves the HJ.

The protein resides in the cytoplasm. The RuvA-RuvB-RuvC complex processes Holliday junction (HJ) DNA during genetic recombination and DNA repair, while the RuvA-RuvB complex plays an important role in the rescue of blocked DNA replication forks via replication fork reversal (RFR). RuvA specifically binds to HJ cruciform DNA, conferring on it an open structure. The RuvB hexamer acts as an ATP-dependent pump, pulling dsDNA into and through the RuvAB complex. HJ branch migration allows RuvC to scan DNA until it finds its consensus sequence, where it cleaves and resolves the cruciform DNA. The chain is Holliday junction branch migration complex subunit RuvA from Desulforudis audaxviator (strain MP104C).